The primary structure comprises 353 residues: Photosystem II protein D1 (353 aa).

The residue at position 2 (threonine 2) is an N-acetylthreonine. Threonine 2 carries the post-translational modification Phosphothreonine. 3 helical membrane passes run 29–46, 118–133, and 142–156; these read YIGW…TATS, HFLL…EWEL, and WIAV…AATA. Residue histidine 118 participates in chlorophyll a binding. Tyrosine 126 is a pheophytin a binding site. Positions 170 and 189 each coordinate [CaMn4O5] cluster. A helical membrane pass occupies residues 197–218; the sequence is FHMLGVAGVFGGSLFSAMHGSL. Histidine 198 provides a ligand contact to chlorophyll a. Residues histidine 215 and 264–265 contribute to the a quinone site; that span reads SF. Histidine 215 lines the Fe cation pocket. A Fe cation-binding site is contributed by histidine 272. Residues 274–288 form a helical membrane-spanning segment; sequence FLAAWPVVGIWFTAL. [CaMn4O5] cluster is bound by residues histidine 332, glutamate 333, aspartate 342, and alanine 344. A propeptide spanning residues 345 to 353 is cleaved from the precursor; that stretch reads AVEAPAVNG.

It belongs to the reaction center PufL/M/PsbA/D family. In terms of assembly, PSII is composed of 1 copy each of membrane proteins PsbA, PsbB, PsbC, PsbD, PsbE, PsbF, PsbH, PsbI, PsbJ, PsbK, PsbL, PsbM, PsbT, PsbX, PsbY, PsbZ, Psb30/Ycf12, at least 3 peripheral proteins of the oxygen-evolving complex and a large number of cofactors. It forms dimeric complexes. Requires The D1/D2 heterodimer binds P680, chlorophylls that are the primary electron donor of PSII, and subsequent electron acceptors. It shares a non-heme iron and each subunit binds pheophytin, quinone, additional chlorophylls, carotenoids and lipids. D1 provides most of the ligands for the Mn4-Ca-O5 cluster of the oxygen-evolving complex (OEC). There is also a Cl(-1) ion associated with D1 and D2, which is required for oxygen evolution. The PSII complex binds additional chlorophylls, carotenoids and specific lipids. as cofactor. Post-translationally, tyr-161 forms a radical intermediate that is referred to as redox-active TyrZ, YZ or Y-Z. C-terminally processed by CTPA; processing is essential to allow assembly of the oxygen-evolving complex and thus photosynthetic growth.

The protein localises to the plastid. Its subcellular location is the chloroplast thylakoid membrane. The enzyme catalyses 2 a plastoquinone + 4 hnu + 2 H2O = 2 a plastoquinol + O2. Its function is as follows. Photosystem II (PSII) is a light-driven water:plastoquinone oxidoreductase that uses light energy to abstract electrons from H(2)O, generating O(2) and a proton gradient subsequently used for ATP formation. It consists of a core antenna complex that captures photons, and an electron transfer chain that converts photonic excitation into a charge separation. The D1/D2 (PsbA/PsbD) reaction center heterodimer binds P680, the primary electron donor of PSII as well as several subsequent electron acceptors. This chain is Photosystem II protein D1, found in Marchantia polymorpha (Common liverwort).